A 102-amino-acid polypeptide reads, in one-letter code: Glutaredoxin (102 aa).

The 100-residue stretch at 3–102 folds into the Glutaredoxin domain; the sequence is MTKTKELVSS…VPLLTEAGAV (100 aa). The cysteines at positions 23 and 26 are disulfide-linked.

It belongs to the glutaredoxin family. CPYC subfamily.

The protein localises to the cytoplasm. In terms of biological role, has a glutathione-disulfide oxidoreductase activity in the presence of NADPH and glutathione reductase. Reduces low molecular weight disulfides and proteins. In Ricinus communis (Castor bean), this protein is Glutaredoxin.